The following is a 132-amino-acid chain: Small ribosomal subunit protein uS8 (132 aa).

The protein belongs to the universal ribosomal protein uS8 family. In terms of assembly, part of the 30S ribosomal subunit. Contacts proteins S5 and S12.

In terms of biological role, one of the primary rRNA binding proteins, it binds directly to 16S rRNA central domain where it helps coordinate assembly of the platform of the 30S subunit. The polypeptide is Small ribosomal subunit protein uS8 (Streptococcus pyogenes serotype M49 (strain NZ131)).